We begin with the raw amino-acid sequence, 322 residues long: HPr kinase/phosphorylase (322 aa).

Residues His146 and Lys167 contribute to the active site. ATP is bound at residue 161–168 (GDSGLGKS). Ser168 contacts Mg(2+). Asp185 serves as the catalytic Proton acceptor; for phosphorylation activity. Proton donor; for dephosphorylation activity. The segment at 209–218 (LEVRGLGLLD) is important for the catalytic mechanism of both phosphorylation and dephosphorylation. Residue Glu210 participates in Mg(2+) binding. The active site involves Arg250. The tract at residues 271–276 (QVAAGR) is important for the catalytic mechanism of dephosphorylation.

The protein belongs to the HPrK/P family. In terms of assembly, homohexamer. It depends on Mg(2+) as a cofactor.

It catalyses the reaction [HPr protein]-L-serine + ATP = [HPr protein]-O-phospho-L-serine + ADP + H(+). It carries out the reaction [HPr protein]-O-phospho-L-serine + phosphate + H(+) = [HPr protein]-L-serine + diphosphate. Functionally, catalyzes the ATP- as well as the pyrophosphate-dependent phosphorylation of a specific serine residue in HPr, a phosphocarrier protein of the phosphoenolpyruvate-dependent sugar phosphotransferase system (PTS). HprK/P also catalyzes the pyrophosphate-producing, inorganic phosphate-dependent dephosphorylation (phosphorolysis) of seryl-phosphorylated HPr (P-Ser-HPr). The polypeptide is HPr kinase/phosphorylase (Paraburkholderia phymatum (strain DSM 17167 / CIP 108236 / LMG 21445 / STM815) (Burkholderia phymatum)).